Consider the following 377-residue polypeptide: N-acetyldiaminopimelate deacetylase (377 aa).

D69 is a catalytic residue. E128 serves as the catalytic Proton acceptor.

The protein belongs to the peptidase M20A family. N-acetyldiaminopimelate deacetylase subfamily.

It catalyses the reaction N-acetyl-(2S,6S)-2,6-diaminopimelate + H2O = (2S,6S)-2,6-diaminopimelate + acetate. It functions in the pathway amino-acid biosynthesis; L-lysine biosynthesis via DAP pathway; LL-2,6-diaminopimelate from (S)-tetrahydrodipicolinate (acetylase route): step 3/3. In terms of biological role, catalyzes the conversion of N-acetyl-diaminopimelate to diaminopimelate and acetate. The protein is N-acetyldiaminopimelate deacetylase of Brevibacillus brevis (strain 47 / JCM 6285 / NBRC 100599).